Reading from the N-terminus, the 164-residue chain is Thiol peroxidase (164 aa).

Residues 17-162 (IKVGDTFPDF…YDEVLQAAQA (146 aa)) enclose the Thioredoxin domain. Catalysis depends on cysteine 58, which acts as the Cysteine sulfenic acid (-SOH) intermediate. The cysteines at positions 58 and 92 are disulfide-linked.

This sequence belongs to the peroxiredoxin family. Tpx subfamily. As to quaternary structure, homodimer.

It catalyses the reaction a hydroperoxide + [thioredoxin]-dithiol = an alcohol + [thioredoxin]-disulfide + H2O. Functionally, thiol-specific peroxidase that catalyzes the reduction of hydrogen peroxide and organic hydroperoxides to water and alcohols, respectively. Plays a role in cell protection against oxidative stress by detoxifying peroxides. This is Thiol peroxidase from Clostridium acetobutylicum (strain ATCC 824 / DSM 792 / JCM 1419 / IAM 19013 / LMG 5710 / NBRC 13948 / NRRL B-527 / VKM B-1787 / 2291 / W).